The sequence spans 491 residues: Ribosome biogenesis protein YTM1 (491 aa).

Residues 8-103 (IKIKFTTNES…EAFLTIEYTR (96 aa)) are ubiquitin-like (UBL) domain. The tract at residues 113 to 491 (SFQNDDWISS…QINKGSDISK (379 aa)) is sufficient for interaction with ERB1 and association with 66S pre-ribosomes. 7 WD repeats span residues 128-167 (RNLS…EKQY), 169-207 (GHSA…VVDQ), 241-280 (GHKA…MAKI), 318-358 (GHTE…CVDT), 360-399 (TTGF…SNTN), 409-449 (GHTN…SLYT), and 456-491 (STKS…DISK). Positions 205–228 (VDQNEEDEEENEANEGDDGDNDME) are disordered. The segment covering 207–225 (QNEEDEEENEANEGDDGDN) has biased composition (acidic residues).

The protein belongs to the WD repeat WDR12/YTM1 family. Component of the NOP7 complex, composed of ERB1, NOP7 and YTM1. The complex is held together by ERB1, which interacts with NOP7 via its N-terminal domain and with YTM1 via a high-affinity interaction between the seven-bladed beta-propeller domains of the 2 proteins. The NOP7 complex associates with the 66S pre-ribosome. Interacts (via UBL domain) with MDN1 (via VWFA/MIDAS domain).

The protein resides in the nucleus. The protein localises to the nucleolus. Its subcellular location is the nucleoplasm. Component of the NOP7 complex, which is required for maturation of the 25S and 5.8S ribosomal RNAs and formation of the 60S ribosome. This Lodderomyces elongisporus (strain ATCC 11503 / CBS 2605 / JCM 1781 / NBRC 1676 / NRRL YB-4239) (Yeast) protein is Ribosome biogenesis protein YTM1.